A 1155-amino-acid chain; its full sequence is uncharacterized protein (1155 aa).

An N-terminal signal peptide occupies residues 1–19 (MNKNIFITLLISSLLLLSG). A lipid anchor (N-palmitoyl cysteine) is attached at Cys-20. Cys-20 is lipidated: S-diacylglycerol cysteine. 4 consecutive transmembrane segments (helical) span residues 291 to 311 (VSAI…IGNI), 395 to 415 (LGFI…FLIF), 424 to 444 (ALIT…FMLF), and 459 to 479 (ISYA…SMII).

This sequence belongs to the TrbL/VirB6 family.

Its subcellular location is the cell membrane. This is an uncharacterized protein from Rickettsia felis (strain ATCC VR-1525 / URRWXCal2) (Rickettsia azadi).